We begin with the raw amino-acid sequence, 423 residues long: Myb-like protein G (423 aa).

Residues 36–90 (TISKQRENWTDEEHQKFLEALTLFDRDWKKIESFVGSKTVIQIRSHAQKYFIKVQ) form the HTH myb-type domain. A DNA-binding region (H-T-H motif) is located at residues 63–86 (WKKIESFVGSKTVIQIRSHAQKYF). 3 disordered regions span residues 93-116 (NTGE…QKQK), 177-205 (QQAV…GTTL), and 284-372 (ISPR…LGNY). Positions 177 to 202 (QQAVTTAQSSQRNGGLPPNPSSNNGG) are enriched in low complexity. Over residues 286–295 (PRNSTGNINV) the composition is skewed to polar residues. The segment covering 302–354 (NNSNNNNNNNNNNNNNNNNNNNNNNNNNNNNNNNNNNNNNNNNNNNNNNNNNN) has biased composition (low complexity). The span at 361–372 (QNHSNMVNLGNY) shows a compositional bias: polar residues.

The protein resides in the nucleus. This Dictyostelium discoideum (Social amoeba) protein is Myb-like protein G (mybG).